The primary structure comprises 418 residues: Putative ion-transport protein YfeO (418 aa).

A run of 12 helical transmembrane segments spans residues 10 to 30 (LLLS…LIMV), 54 to 74 (DSPL…GLVI), 99 to 119 (ALPG…SLGP), 120 to 140 (EHPI…RLLP), 149 to 169 (ILAS…AALI), 186 to 206 (LFAP…FFHP), 223 to 243 (ILSG…AVWC), 258 to 278 (VFVL…GGPV), 300 to 320 (DYFL…ASGF), 322 to 342 (GGRI…LHEH), 343 to 363 (VPAV…VLVV), and 371 to 391 (LFMA…CIVM).

The protein belongs to the chloride channel (TC 2.A.49) family.

Its subcellular location is the cell membrane. This Escherichia coli O45:K1 (strain S88 / ExPEC) protein is Putative ion-transport protein YfeO.